The primary structure comprises 388 residues: Galactokinase (388 aa).

33-36 provides a ligand contact to substrate; that stretch reads EHTD. ATP-binding positions include S67 and 125 to 131; that span reads GSGLSSS. Mg(2+) contacts are provided by S131 and E163. D175 (proton acceptor) is an active-site residue. Y225 serves as a coordination point for substrate.

The protein belongs to the GHMP kinase family. GalK subfamily.

It is found in the cytoplasm. It carries out the reaction alpha-D-galactose + ATP = alpha-D-galactose 1-phosphate + ADP + H(+). It participates in carbohydrate metabolism; galactose metabolism. Catalyzes the transfer of the gamma-phosphate of ATP to D-galactose to form alpha-D-galactose-1-phosphate (Gal-1-P). This Lactobacillus helveticus (Lactobacillus suntoryeus) protein is Galactokinase.